The following is a 362-amino-acid chain: Peptide chain release factor 1 (362 aa).

An N5-methylglutamine modification is found at Q236.

Belongs to the prokaryotic/mitochondrial release factor family. Post-translationally, methylated by PrmC. Methylation increases the termination efficiency of RF1.

The protein resides in the cytoplasm. In terms of biological role, peptide chain release factor 1 directs the termination of translation in response to the peptide chain termination codons UAG and UAA. In Lactobacillus helveticus (strain DPC 4571), this protein is Peptide chain release factor 1.